The chain runs to 142 residues: Putative pre-16S rRNA nuclease (142 aa).

Belongs to the YqgF nuclease family.

It is found in the cytoplasm. In terms of biological role, could be a nuclease involved in processing of the 5'-end of pre-16S rRNA. This Lactobacillus delbrueckii subsp. bulgaricus (strain ATCC BAA-365 / Lb-18) protein is Putative pre-16S rRNA nuclease.